Consider the following 505-residue polypeptide: Outer capsid protein VP5 (505 aa).

Residues 1–42 form an involved in membrane permeabilization region; that stretch reads MGKFTSFLKRAGNATKRALTSDSAKKMYKLAGKTLQRVVESE.

It belongs to the orbivirus VP5 family.

It localises to the virion. Its function is as follows. VP5 protein is one of the two proteins (with VP2) which constitute the virus particle outer capsid. Acts as a membrane permeabilization protein that mediates release of viral particles from endosomal compartments into the cytoplasm. Permeabilization activity is probably negatively regulated by VP2 and is triggered by endosomal degradation of VP2 and exposure to low pH. In African horse sickness virus (AHSV), this protein is Outer capsid protein VP5 (Segment-6).